The chain runs to 262 residues: 26 kDa secreted antigen (262 aa).

An N-terminal signal peptide occupies residues 1–21; it reads MSVVHKACLIALLFVSSGVAQ. 2 consecutive ShKT domains span residues 23-57 and 59-93; these read CMDSASDCAANAGSCFTRPVSQVLQNRCQRTCNTC and CRDEANNCAASINLCQNPTFEPLVRDRCQKTCGLC. Intrachain disulfides connect C23–C57, C30–C50, C37–C54, C59–C93, C66–C86, and C73–C90.

The protein belongs to the phosphatidylethanolamine-binding protein family.

It is found in the secreted. Functionally, binds phosphatidylethanolamine. The protein is 26 kDa secreted antigen (TES-26) of Toxocara canis (Canine roundworm).